Consider the following 487-residue polypeptide: Malonate-semialdehyde dehydrogenase (487 aa).

Ala-150, Phe-152, Lys-176, Glu-179, Arg-180, Ser-229, and Thr-251 together coordinate NAD(+). Residue Cys-284 is the Nucleophile of the active site. Glu-382 provides a ligand contact to NAD(+).

The protein belongs to the aldehyde dehydrogenase family. IolA subfamily. As to quaternary structure, homotetramer.

The catalysed reaction is 3-oxopropanoate + NAD(+) + CoA + H2O = hydrogencarbonate + acetyl-CoA + NADH + H(+). The enzyme catalyses 2-methyl-3-oxopropanoate + NAD(+) + CoA + H2O = propanoyl-CoA + hydrogencarbonate + NADH + H(+). It functions in the pathway polyol metabolism; myo-inositol degradation into acetyl-CoA; acetyl-CoA from myo-inositol: step 7/7. Catalyzes the oxidation of malonate semialdehyde (MSA) and methylmalonate semialdehyde (MMSA) into acetyl-CoA and propanoyl-CoA, respectively. Is involved in a myo-inositol catabolic pathway. Bicarbonate, and not CO2, is the end-product of the enzymatic reaction. This Bacillus subtilis subsp. natto protein is Malonate-semialdehyde dehydrogenase.